We begin with the raw amino-acid sequence, 310 residues long: 2-methoxy-6-polyprenyl-1,4-benzoquinol methylase, mitochondrial (310 aa).

The transit peptide at 1–6 (MAHMRS) directs the protein to the mitochondrion. Residues threonine 99, aspartate 154, and 182 to 183 (DA) each bind S-adenosyl-L-methionine.

It belongs to the class I-like SAM-binding methyltransferase superfamily. MenG/UbiE family. Component of a multi-subunit COQ enzyme complex, composed of at least coq3, coq4, coq5, coq6, coq7 and coq9.

The protein resides in the mitochondrion inner membrane. It carries out the reaction a 2-methoxy-6-(all-trans-polyprenyl)benzene-1,4-diol + S-adenosyl-L-methionine = a 5-methoxy-2-methyl-3-(all-trans-polyprenyl)benzene-1,4-diol + S-adenosyl-L-homocysteine + H(+). Its pathway is cofactor biosynthesis; ubiquinone biosynthesis. Functionally, methyltransferase required for the conversion of 2-polyprenyl-6-methoxy-1,4-benzoquinol (DDMQH2) to 2-polyprenyl-3-methyl-6-methoxy-1,4-benzoquinol (DMQH2). In Xenopus laevis (African clawed frog), this protein is 2-methoxy-6-polyprenyl-1,4-benzoquinol methylase, mitochondrial.